We begin with the raw amino-acid sequence, 543 residues long: CTP synthase (543 aa).

The interval 1 to 267 is amidoligase domain; it reads MKQTKYIFVT…LSPIAEILDL (267 aa). Serine 15 provides a ligand contact to CTP. Serine 15 is a binding site for UTP. Residues 16–21 and aspartate 73 contribute to the ATP site; that span reads SLGKGI. Mg(2+)-binding residues include aspartate 73 and glutamate 141. Residues 148 to 150, 188 to 193, and lysine 224 each bind CTP; these read DIE and KTKPTQ. Residues 188-193 and lysine 224 contribute to the UTP site; that span reads KTKPTQ. A Glutamine amidotransferase type-1 domain is found at 292-543; that stretch reads KIAFVGKYVD…IKAAINYEDN (252 aa). Glycine 354 contributes to the L-glutamine binding site. Cysteine 381 serves as the catalytic Nucleophile; for glutamine hydrolysis. L-glutamine is bound by residues 382 to 385, glutamate 405, and arginine 473; that span reads LGMQ. Residues histidine 516 and glutamate 518 contribute to the active site.

Belongs to the CTP synthase family. In terms of assembly, homotetramer.

The enzyme catalyses UTP + L-glutamine + ATP + H2O = CTP + L-glutamate + ADP + phosphate + 2 H(+). It carries out the reaction L-glutamine + H2O = L-glutamate + NH4(+). It catalyses the reaction UTP + NH4(+) + ATP = CTP + ADP + phosphate + 2 H(+). Its pathway is pyrimidine metabolism; CTP biosynthesis via de novo pathway; CTP from UDP: step 2/2. Allosterically activated by GTP, when glutamine is the substrate; GTP has no effect on the reaction when ammonia is the substrate. The allosteric effector GTP functions by stabilizing the protein conformation that binds the tetrahedral intermediate(s) formed during glutamine hydrolysis. Inhibited by the product CTP, via allosteric rather than competitive inhibition. Catalyzes the ATP-dependent amination of UTP to CTP with either L-glutamine or ammonia as the source of nitrogen. Regulates intracellular CTP levels through interactions with the four ribonucleotide triphosphates. The polypeptide is CTP synthase (Campylobacter jejuni subsp. jejuni serotype O:2 (strain ATCC 700819 / NCTC 11168)).